Consider the following 56-residue polypeptide: Calsequestrin-1 (56 aa).

Phosphotyrosine is present on tyrosine 9. Serine 47 is subject to Phosphoserine.

It belongs to the calsequestrin family. In terms of assembly, monomer; increases in response to a depletion of intracellular calcium. Homodimer. Homotetramer and homopolymer. Can form linear homooligomers. Ca(2+) ions promote oligomerization. Interacts (via C-terminal end and preferentially with the monomeric form) with STIM1; this interaction increases in response to a depletion of intracellular calcium, decreases both STIM1 aggregation and clustering, interaction of STIM1 with ORAI1 and store-operated Ca(2+) entry (SOCE) activity. Interacts with ASPH and TRDN. Post-translationally, N-glycosylated.

It is found in the endoplasmic reticulum. Its subcellular location is the sarcoplasmic reticulum. It localises to the sarcoplasmic reticulum lumen. The protein resides in the sarcoplasmic reticulum membrane. The protein localises to the mitochondrion matrix. Functionally, calsequestrin is a high-capacity, moderate affinity, calcium-binding protein and thus acts as an internal calcium store in muscle. Calcium ions are bound by clusters of acidic residues at the protein surface, often at the interface between subunits. Can bind around 80 Ca(2+) ions. Regulates the release of lumenal Ca(2+) via the calcium release channel RYR1; this plays an important role in triggering muscle contraction. Negatively regulates store-operated Ca(2+) entry (SOCE) activity. The polypeptide is Calsequestrin-1 (CASQ1) (Canis lupus familiaris (Dog)).